A 208-amino-acid polypeptide reads, in one-letter code: MVLDELISEFDRGLRSLTGISRMSRPVPAPAEAPAAELTPAERTHAAGLMRVNHVGEVCAQALYQAQKLTARSSAAKAMFEEAAREEEDHLAWTAHRLKELDSRPSVLNPLWYAGALAIGVAAGTLGDKVSLGFMAETERQVESHLDGHLSDLPAGDTASRAIVEQMRADEAKHGKAATDAGGIELPLPARMLMRAASKIMTRTAYYL.

6 residues coordinate Fe cation: glutamate 57, glutamate 87, histidine 90, glutamate 139, glutamate 171, and histidine 174.

The protein belongs to the COQ7 family. The cofactor is Fe cation.

It is found in the cell membrane. It carries out the reaction a 5-methoxy-2-methyl-3-(all-trans-polyprenyl)benzene-1,4-diol + AH2 + O2 = a 3-demethylubiquinol + A + H2O. Its pathway is cofactor biosynthesis; ubiquinone biosynthesis. Catalyzes the hydroxylation of 2-nonaprenyl-3-methyl-6-methoxy-1,4-benzoquinol during ubiquinone biosynthesis. The polypeptide is 3-demethoxyubiquinol 3-hydroxylase (Burkholderia multivorans (strain ATCC 17616 / 249)).